The chain runs to 111 residues: uncharacterized protein (111 aa).

The chain crosses the membrane as a helical span at residues 48–70; the sequence is LFLVPFPASFTRWLTFLFHLVIY.

It is found in the membrane. This is an uncharacterized protein from Saccharomyces cerevisiae (strain ATCC 204508 / S288c) (Baker's yeast).